The sequence spans 82 residues: MVVIRMARGGAKKRSFYRIVVADKRSPRDGRFIEKLGFFNPLAKGGEERLKLDVAKAEAWLAKGAQPSDRVASLIKEAKKAA.

It belongs to the bacterial ribosomal protein bS16 family.

The chain is Small ribosomal subunit protein bS16 from Francisella tularensis subsp. holarctica (strain FTNF002-00 / FTA).